The primary structure comprises 185 residues: Ribosome-recycling factor (185 aa).

This sequence belongs to the RRF family.

It is found in the cytoplasm. Functionally, responsible for the release of ribosomes from messenger RNA at the termination of protein biosynthesis. May increase the efficiency of translation by recycling ribosomes from one round of translation to another. This Haemophilus ducreyi (strain 35000HP / ATCC 700724) protein is Ribosome-recycling factor.